The sequence spans 84 residues: MISIKVLFFGEACQLVGKREEAIDFPEETDYEEIRKTILENYPALQKIEKVMMLAVDQEYANPGDRFELVRFTEIAVIPPLSGG.

Gly84 bears the 1-thioglycine; alternate mark. The residue at position 84 (Gly84) is a Glycyl adenylate; alternate.

It belongs to the MoaD family. MOCS2A subfamily. In terms of assembly, heterotetramer; composed of 2 small (MOCS2A) and 2 large (MOCS2B) subunits. In terms of processing, C-terminal thiocarboxylation occurs in 2 steps, it is first acyl-adenylated (-COAMP) via the hesA/moeB/thiF part of MOCS3, then thiocarboxylated (-COSH) via the rhodanese domain of MOCS3.

It is found in the cytoplasm. It functions in the pathway cofactor biosynthesis; molybdopterin biosynthesis. Functionally, acts as a sulfur carrier required for molybdopterin biosynthesis. Component of the molybdopterin synthase complex that catalyzes the conversion of precursor Z into molybdopterin by mediating the incorporation of 2 sulfur atoms into precursor Z to generate a dithiolene group. In the complex, serves as sulfur donor by being thiocarboxylated (-COSH) at its C-terminus by MOCS3. After interaction with MOCS2B, the sulfur is then transferred to precursor Z to form molybdopterin. This is Molybdopterin synthase sulfur carrier subunit from Caenorhabditis elegans.